The sequence spans 81 residues: UPF0248 protein TK0315 (81 aa).

Belongs to the UPF0248 family.

This chain is UPF0248 protein TK0315, found in Thermococcus kodakarensis (strain ATCC BAA-918 / JCM 12380 / KOD1) (Pyrococcus kodakaraensis (strain KOD1)).